Reading from the N-terminus, the 270-residue chain is tRNA pseudouridine synthase A (270 aa).

Residue aspartate 51 is the Nucleophile of the active site. Tyrosine 109 provides a ligand contact to substrate.

Belongs to the tRNA pseudouridine synthase TruA family. As to quaternary structure, homodimer.

It carries out the reaction uridine(38/39/40) in tRNA = pseudouridine(38/39/40) in tRNA. Functionally, formation of pseudouridine at positions 38, 39 and 40 in the anticodon stem and loop of transfer RNAs. The sequence is that of tRNA pseudouridine synthase A from Burkholderia mallei (strain ATCC 23344).